A 911-amino-acid polypeptide reads, in one-letter code: FIGNL1-interacting regulator of recombination and mitosis (911 aa).

The disordered stretch occupies residues 830–853 (SEKSQPAQTPLTEEPCAKRARQET). A compositionally biased stretch (basic and acidic residues) spans 844-853 (PCAKRARQET).

The protein localises to the chromosome. It is found in the centromere. Its subcellular location is the kinetochore. It localises to the nucleus. The protein resides in the midbody. The protein localises to the cytoplasm. It is found in the cytoskeleton. Its subcellular location is the spindle. Functionally, may play a role in chromosome segregation. The polypeptide is FIGNL1-interacting regulator of recombination and mitosis (Danio rerio (Zebrafish)).